Here is a 234-residue protein sequence, read N- to C-terminus: Pepsin inhibitor Dit33 (234 aa).

The signal sequence occupies residues Met1 to Ala17. The cysteines at positions 135 and 230 are disulfide-linked. Positions Arg200–Glu222 are disordered. The span at Ser204–Ala219 shows a compositional bias: polar residues.

The protein belongs to the protease inhibitor I33 family.

The protein resides in the secreted. Its function is as follows. Aspartyl protease inhibitor. In Dirofilaria immitis (Canine heartworm), this protein is Pepsin inhibitor Dit33 (DIT33).